The chain runs to 573 residues: MLO-like protein 2 (573 aa).

Residues Met-1–Thr-15 are Extracellular-facing. The chain crosses the membrane as a helical span at residues Trp-16–Ile-36. Residues His-37–Glu-61 lie on the Cytoplasmic side of the membrane. A helical transmembrane segment spans residues Leu-62–Ile-82. Residues Cys-83 to His-164 are Extracellular-facing. A helical membrane pass occupies residues Ile-165 to Gly-185. The Cytoplasmic segment spans residues Lys-186–Asp-287. The chain crosses the membrane as a helical span at residues Phe-288 to Thr-308. The Extracellular portion of the chain corresponds to Asn-309 to Leu-317. Residues Trp-318–Ile-338 traverse the membrane as a helical segment. Residues Thr-339–Arg-371 are Cytoplasmic-facing. A helical transmembrane segment spans residues Phe-372–Ala-392. Residues Trp-393–Leu-415 are Extracellular-facing. A helical transmembrane segment spans residues Val-416–Val-436. Topologically, residues Thr-437–Lys-573 are cytoplasmic. The segment at Asp-450–Arg-471 is calmodulin-binding. The disordered stretch occupies residues Thr-462–Lys-573. Composition is skewed to polar residues over residues Ser-473–Ser-490 and Asn-498–Pro-513. Ser-512 carries the post-translational modification Phosphoserine. Positions Glu-522–Ser-548 are enriched in basic and acidic residues.

This sequence belongs to the MLO family.

It is found in the membrane. Functionally, may be involved in modulation of pathogen defense and leaf cell death. Activity seems to be regulated by Ca(2+)-dependent calmodulin binding and seems not to require heterotrimeric G proteins. In Arabidopsis thaliana (Mouse-ear cress), this protein is MLO-like protein 2 (MLO2).